The following is a 298-amino-acid chain: MGQKINPHGFRLGITTDWKSRWYADKQYSEYVAEDVKIRRRLSRGMERAGISKVEIERTRERVRVDIHTARPGIVIGRRGAEADRIRGSLEKLTGKQVQLNILEVKNAEADAQLVAQGVAEQLSNRVSFRRAMRKAIQSAMRSPQVKGIRVQCGGRLGGAEMSRSEFYREGRVPLHTLRADIDYGFFEARTTFGRIGVKVWIYKGELVGGLKQKQQESEVRPPRGERGERGGRPERGGRRRSGASGTTGSGGTEAGRAAADKSKGSAQSPEQAQTSGDVASANAPQVAEPRADEKTEG.

The region spanning 38-106 (IRRRLSRGME…QVQLNILEVK (69 aa)) is the KH type-2 domain. The segment at 212–298 (KQKQQESEVR…EPRADEKTEG (87 aa)) is disordered. Over residues 214–237 (KQQESEVRPPRGERGERGGRPERG) the composition is skewed to basic and acidic residues. Over residues 265-278 (GSAQSPEQAQTSGD) the composition is skewed to polar residues.

Belongs to the universal ribosomal protein uS3 family. Part of the 30S ribosomal subunit. Forms a tight complex with proteins S10 and S14.

In terms of biological role, binds the lower part of the 30S subunit head. Binds mRNA in the 70S ribosome, positioning it for translation. The protein is Small ribosomal subunit protein uS3 of Saccharopolyspora erythraea (strain ATCC 11635 / DSM 40517 / JCM 4748 / NBRC 13426 / NCIMB 8594 / NRRL 2338).